The chain runs to 531 residues: MLLLNSALFILCLVCWLPGTSSSRVLTRREGPQCSRSVDVAVVGAGPSGTYSAYKLRNKGQTVELFEYSNRIGGRLFTTHLPNVPDLNLESGGMRYFKNHHKIFGVLVKELNLSNKEFTEGFGKPGRTRFFARGKSLTLEEMTSGDVPYNLSTEEKANQANLAGYYLKKLTGFDGEVLTIPQANKLEVDDGRKLYQLTVDEALDKVGTPEGKEFLKAFSTGNTEFIEGVSAVNYFLVELGEREEEILTLTDGMSALPQALADAFLKSSTSHALTLNRKLQSLSKTDNGLYLLEFLETNTHEGYTEESNITDLVCARKVILAIPQSALIHLDWKPLRSETVNEAFNAVKFIPTSKVFLTFPTAWWLSDAVKNPAFVVKSTSPFNQMYDWKSSNVTGDAAMIASYADTSDTKFQENLNSKGELIPGSAPGANRVTVALKEELLSQLSQAYGIERSDIPEPKSGTSQFWSSYPFEGDWTVWKAGYHCEYTQYIIERPSLIDDVFVVGSDHVNCIENAWTESAFLSVENVFEKYF.

Positions 1-22 (MLLLNSALFILCLVCWLPGTSS) are cleaved as a signal peptide. Residues 23-29 (SRVLTRR) constitute a propeptide that is removed on maturation. Residues asparagine 112, asparagine 150, asparagine 308, and asparagine 392 are each glycosylated (N-linked (GlcNAc...) asparagine).

It to A.kurodai aplysianin-A. Homodimer. Collar tissue.

Antibacterial glycoprotein. The protein is Achacin of Lissachatina fulica (Giant African land snail).